The chain runs to 539 residues: Trigger factor (539 aa).

Positions 163–252 constitute a PPIase FKBP-type domain; the sequence is GDQLTVQIET…VLDVQERLLP (90 aa). 2 stretches are compositionally biased toward low complexity: residues 434–447 and 475–484; these read SFEQ…ASEP and AASPEAASEP. The disordered stretch occupies residues 434–539; the sequence is SFEQAASPEA…DVATPEARTE (106 aa). Polar residues predominate over residues 509–528; the sequence is TETPIVSQEENGESVENQSV.

It belongs to the FKBP-type PPIase family. Tig subfamily.

It is found in the cytoplasm. It carries out the reaction [protein]-peptidylproline (omega=180) = [protein]-peptidylproline (omega=0). In terms of biological role, involved in protein export. Acts as a chaperone by maintaining the newly synthesized protein in an open conformation. Functions as a peptidyl-prolyl cis-trans isomerase. The chain is Trigger factor from Roseiflexus sp. (strain RS-1).